The sequence spans 271 residues: MDVQTLMAASAGAVASRLLCHPIDTITVHKQTIGKFSFKTMPLKAYYRGLPISLTLITPATCLYLSTYVEAKRRFKPSVGEGAILYSICGMTAEVVSSFVWTPLEVIKARTQISQKGSVINTISTLARSEGLKGFYRGYWMGVAIYLPTTVSWWVCYEESKKYLQKQSNWDISVIAPICSALGTVVATTISTPLDIVKTRYQVATSSAMRKAEYGLQAEKELGILEIAKLLFSKHGVKGFTRGLFTRMCYIMPSGMISMSVFESFKSKDID.

Solcar repeat units follow at residues 3–74 (VQTL…AKRR), 81–163 (EGAI…SKKY), and 171–268 (DISV…FKSK). A run of 6 helical transmembrane segments spans residues 5–26 (TLMA…IDTI), 49–69 (GLPI…STYV), 84–104 (ILYS…WTPL), 138–158 (GYWM…VCYE), 170–190 (WDIS…ATTI), and 240–261 (FTRG…SMSV).

The protein belongs to the mitochondrial carrier (TC 2.A.29) family.

The protein resides in the mitochondrion inner membrane. This is an uncharacterized protein from Schizosaccharomyces pombe (strain 972 / ATCC 24843) (Fission yeast).